The sequence spans 551 residues: HTH-type transcriptional regulator SgrR (551 aa).

An HTH marR-type domain is found at 1-116; that stretch reads MPSARLQQQF…LVSHLGRSFR (116 aa). The segment at residues 26 to 49 is a DNA-binding region (H-T-H motif); sequence LNELAALLSCSRRHMRTLLNTMQD. Residues 163-492 are solute-binding; it reads ELEADIAHHW…IDWQADAARW (330 aa).

Its function is as follows. Activates the small RNA gene sgrS under glucose-phosphate stress conditions as well as yfdZ. Represses its own transcription under both stress and non-stress conditions. Might act as a sensor of the intracellular accumulation of phosphoglucose by binding these molecules in its C-terminal solute-binding domain. This is HTH-type transcriptional regulator SgrR from Escherichia coli O1:K1 / APEC.